Here is an 80-residue protein sequence, read N- to C-terminus: D-alanyl carrier protein 2 (80 aa).

Positions 1 to 80 (MIMDDVKATV…KIVAKVASLQ (80 aa)) constitute a Carrier domain. O-(pantetheine 4'-phosphoryl)serine is present on S38.

The protein belongs to the DltC family. Post-translationally, 4'-phosphopantetheine is transferred from CoA to a specific serine of apo-DCP.

It localises to the cytoplasm. The protein operates within cell wall biogenesis; lipoteichoic acid biosynthesis. Carrier protein involved in the D-alanylation of lipoteichoic acid (LTA). The loading of thioester-linked D-alanine onto DltC is catalyzed by D-alanine--D-alanyl carrier protein ligase DltA. The DltC-carried D-alanyl group is further transferred to cell membrane phosphatidylglycerol (PG) by forming an ester bond, probably catalyzed by DltD. D-alanylation of LTA plays an important role in modulating the properties of the cell wall in Gram-positive bacteria, influencing the net charge of the cell wall. This chain is D-alanyl carrier protein 2, found in Lactiplantibacillus plantarum (strain ATCC BAA-793 / NCIMB 8826 / WCFS1) (Lactobacillus plantarum).